Reading from the N-terminus, the 444-residue chain is COP9 signalosome complex subunit 2 (444 aa).

The interval 1 to 31 (MSDNDDDFMCDDDEDYGLEYSEDSNSEPDVD) is disordered. One can recognise a PCI domain in the interval 255-417 (AHTDFFEAFK…QVLQLDKINS (163 aa)).

Belongs to the CSN2 family. In terms of assembly, component of the CSN complex, probably composed of CSN1b, alien/CSN2, CSN3, CSN4, CSN5, CSN6, CSN7 and CSN8. Interacts with Rpn6. Expressed during embryonic stages 11-14 in the muscle attachment sites (apodemes); pharynx attachment to the roof of the mouth and in the epidermis of the head for the dorsal and ventral prothoracic pharyngeal muscle attachment. From stage 16 onwards expression is seen in all thoracic and abdominal apodemes.

Its subcellular location is the cytoplasm. The protein localises to the nucleus. Component of the COP9 signalosome complex (CSN), a complex involved in various cellular and developmental processes. The CSN complex is an essential regulator of the ubiquitin (Ubl) conjugation pathway by mediating the deneddylation of the cullin subunits of the SCF-type E3 ligase complexes, leading to decrease the Ubl ligase activity of SCF. The CSN complex plays an essential role in oogenesis and embryogenesis and is required for proper photoreceptor R cell differentiation and promote lamina glial cell migration or axon targeting. It also promotes Ubl-dependent degradation of cyclin E (CycE) during early oogenesis. In Drosophila melanogaster (Fruit fly), this protein is COP9 signalosome complex subunit 2.